The chain runs to 102 residues: Small ribosomal subunit protein uS10 (102 aa).

This sequence belongs to the universal ribosomal protein uS10 family. Part of the 30S ribosomal subunit.

In terms of biological role, involved in the binding of tRNA to the ribosomes. The polypeptide is Small ribosomal subunit protein uS10 (Limosilactobacillus reuteri (strain DSM 20016) (Lactobacillus reuteri)).